We begin with the raw amino-acid sequence, 64 residues long: Large ribosomal subunit protein uL30 (64 aa).

Belongs to the universal ribosomal protein uL30 family. As to quaternary structure, part of the 50S ribosomal subunit.

The polypeptide is Large ribosomal subunit protein uL30 (Desulforudis audaxviator (strain MP104C)).